The primary structure comprises 295 residues: Probable isochorismatase (295 aa).

Residues 1 to 21 (MGIPKIAGYPLPTPAEFPDNR) are disordered. The region spanning 207 to 286 (EIRSQKPLTL…EWWLVIEQAR (80 aa)) is the Carrier domain. Residue S247 is modified to O-(pantetheine 4'-phosphoryl)serine.

It belongs to the isochorismatase family. The cofactor is pantetheine 4'-phosphate.

The enzyme catalyses isochorismate + H2O = (2S,3S)-2,3-dihydroxy-2,3-dihydrobenzoate + pyruvate. Its pathway is siderophore biosynthesis; vulnibactin biosynthesis. In terms of biological role, involved in the biosynthesis of the catechol siderophore vulnibactin. Vulnibactin is a chelating compound involved in transporting iron from the bacterial environment into the cell cytoplasm. This chain is Probable isochorismatase (venB), found in Vibrio vulnificus (strain CMCP6).